The primary structure comprises 564 residues: Aspyridones efflux protein (564 aa).

Residues 1 to 17 show a composition bias toward low complexity; sequence MHPDQADTAAMQQQTTT. Positions 1–49 are disordered; sequence MHPDQADTAAMQQQTTTECSDRSRPEKAEEGHAREHTVTRTCSREPEQT. The segment covering 19–47 has biased composition (basic and acidic residues); that stretch reads CSDRSRPEKAEEGHAREHTVTRTCSREPE. The next 10 helical transmembrane spans lie at 66–86, 127–147, 158–178, 185–205, 216–236, 260–280, 287–307, 335–355, 368–388, and 392–412; these read AICLTIFLISVDFSILATAIP, WTFLLALLTFEVGSIICATAP, IAGCGNAGLLSGALLILTHSV, LFMAMTGGTYGVAAIAGPPLG, WCFWINLPIGALTFLVIVFLF, VGTLMFMPAIICVLLALQWGG, SGIVVALLVVGGVLVIAFGIV, FALGAAFFVFIYFLPIWFQGV, LPMLVGNIVATAVSGVLVTII, and APFMILGTILASVGAGLLLLF. N-linked (GlcNAc...) asparagine glycosylation is present at Asn-415. A run of 2 helical transmembrane segments spans residues 416–436 and 454–474; these read VTAASWIGYQAIVGLGIGFGW and IATATLSFAQTLGGTLFVSVA. Asn-524 carries N-linked (GlcNAc...) asparagine glycosylation. The chain crosses the membrane as a helical span at residues 528-548; it reads LSAFFVATIMAIMSLVGCTFV.

Belongs to the major facilitator superfamily. TCR/Tet family.

It localises to the cell membrane. Its function is as follows. Efflux pump that may be involved in the secretion of leporins. The polypeptide is Aspyridones efflux protein (TP) (Neocamarosporium betae (Beet black rot fungus)).